The chain runs to 242 residues: Glutamine transport ATP-binding protein GlnQ (242 aa).

The 235-residue stretch at 2-236 (IYFHQVNKYY…PKEERAKVFL (235 aa)) folds into the ABC transporter domain. An ATP-binding site is contributed by 34–41 (GPSGSGKS).

It belongs to the ABC transporter superfamily.

The protein resides in the cell membrane. In terms of biological role, part of the binding-protein-dependent transport system for glutamine. Probably responsible for energy coupling to the transport system. The chain is Glutamine transport ATP-binding protein GlnQ (glnQ) from Geobacillus stearothermophilus (Bacillus stearothermophilus).